The sequence spans 632 residues: Cleavage stimulation factor subunit 2 tau variant (632 aa).

An RRM domain is found at 16–94 (RSVFVGNIPY…RALRVDNAAS (79 aa)). 2 disordered regions span residues 201 to 296 (IPGK…PGGA) and 365 to 433 (YMGP…TRPM). The span at 213 to 233 (PGGPGPSGPGGPGPGPAPGLC) shows a compositional bias: pro residues. The segment covering 234–244 (PGPNVMLNQQN) has biased composition (low complexity). Pro residues predominate over residues 275–287 (APGPIPAAVPGPG). A compositionally biased stretch (low complexity) spans 365–375 (YMGPPHQGPPM). 2 stretches are compositionally biased toward basic and acidic residues: residues 377–390 (HGHD…HDMR) and 420–433 (RGGR…TRPM). Residues 428-432 (METRP) form a 1-1; approximate repeat. The segment at 428 to 466 (METRPMETEVLEPRGMERRMETCAMETRGMDARGLEMRG) is 8 X 5 AA tandem repeats of M-E-T-R-[AG]. The stretch at 433-437 (METEV) is one 1-2; approximate repeat. A 1-3; approximate repeat occupies 438–442 (LEPRG). The stretch at 443-446 (MERR) is one 1-4; approximate repeat. The stretch at 447–451 (METCA) is one 1-5; approximate repeat. The stretch at 452-456 (METRG) is one 1-6 repeat. A 1-7; approximate repeat occupies 457–461 (MDARG). The 1-8; approximate repeat unit spans residues 462-466 (LEMRG). The 2-1; approximate repeat unit spans residues 508–512 (GGTMQ). The 12 X 5 AA tandem repeats of G-[AT]-G-[MI]-Q stretch occupies residues 508–565 (GGTMQGAGIQGGGMQGAGMQGGGMQGAGMQGGGMQGAGMQAGMQGASMQGGMQGAGMQ). The 2-2 repeat unit spans residues 513–517 (GAGIQ). A 2-3; approximate repeat occupies 518–522 (GGGMQ). Residues 519–543 (GGMQGAGMQGGGMQGAGMQGGGMQG) show a composition bias toward gly residues. The disordered stretch occupies residues 519-590 (GGMQGAGMQG…GQSQVTPQDQ (72 aa)). The 2-4 repeat unit spans residues 523–527 (GAGMQ). The stretch at 528 to 532 (GGGMQ) is one 2-5; approximate repeat. A 2-6 repeat occupies 533-537 (GAGMQ). The stretch at 538–542 (GGGMQ) is one 2-7; approximate repeat. Residues 543 to 547 (GAGMQ) form a 2-8 repeat. Positions 544-557 (AGMQAGMQGASMQG) are enriched in low complexity. Residues 548–551 (AGMQ) form a 2-9; approximate repeat. A 2-10; approximate repeat occupies 552-556 (GASMQ). A 2-11; approximate repeat occupies 557–560 (GGMQ). Gly residues predominate over residues 558–574 (GMQGAGMQGASKQGGGQ). The 2-12 repeat unit spans residues 561-565 (GAGMQ). Residues 575–584 (PSSFSPGQSQ) show a composition bias toward low complexity. Residue S579 is modified to Phosphoserine.

In terms of tissue distribution, expressed in testes, where it is restricted to pachytene spermatocytes and spermatids, and in the brain (at protein level).

Its subcellular location is the nucleus. Its function is as follows. May play a significant role in AAUAAA-independent mRNA polyadenylation in germ cells. Directly involved in the binding to pre-mRNAs. The chain is Cleavage stimulation factor subunit 2 tau variant (Cstf2t) from Mus musculus (Mouse).